Here is a 190-residue protein sequence, read N- to C-terminus: Ribosome maturation factor RimM (190 aa).

Residues 114 to 190 form the PRC barrel domain; sequence DDEYYWVDLI…CITVDWQPDY (77 aa).

It belongs to the RimM family. Binds ribosomal protein uS19.

It localises to the cytoplasm. In terms of biological role, an accessory protein needed during the final step in the assembly of 30S ribosomal subunit, possibly for assembly of the head region. Essential for efficient processing of 16S rRNA. May be needed both before and after RbfA during the maturation of 16S rRNA. It has affinity for free ribosomal 30S subunits but not for 70S ribosomes. This chain is Ribosome maturation factor RimM, found in Acidovorax sp. (strain JS42).